A 664-amino-acid chain; its full sequence is Methionine--tRNA ligase (664 aa).

The short motif at 15 to 25 is the 'HIGH' region element; sequence YYPSGKLHIGH. Positions 311–315 match the 'KMSKS' region motif; sequence KMSKS. Position 314 (lysine 314) interacts with ATP. The tract at residues 536–556 is disordered; sequence MQGSAPAKEETKEEEPQEVDR. The tRNA-binding domain maps to 570–662; sequence LRVAEVIEAE…IDQSLPKGTR (93 aa).

Belongs to the class-I aminoacyl-tRNA synthetase family. MetG type 2B subfamily. In terms of assembly, homodimer.

Its subcellular location is the cytoplasm. The enzyme catalyses tRNA(Met) + L-methionine + ATP = L-methionyl-tRNA(Met) + AMP + diphosphate. In terms of biological role, is required not only for elongation of protein synthesis but also for the initiation of all mRNA translation through initiator tRNA(fMet) aminoacylation. The sequence is that of Methionine--tRNA ligase (metG) from Bacillus subtilis (strain 168).